A 422-amino-acid polypeptide reads, in one-letter code: Tryptophan synthase beta chain (422 aa).

K111 is modified (N6-(pyridoxal phosphate)lysine).

The protein belongs to the TrpB family. As to quaternary structure, tetramer of two alpha and two beta chains. Pyridoxal 5'-phosphate is required as a cofactor.

The enzyme catalyses (1S,2R)-1-C-(indol-3-yl)glycerol 3-phosphate + L-serine = D-glyceraldehyde 3-phosphate + L-tryptophan + H2O. It functions in the pathway amino-acid biosynthesis; L-tryptophan biosynthesis; L-tryptophan from chorismate: step 5/5. Functionally, the beta subunit is responsible for the synthesis of L-tryptophan from indole and L-serine. The sequence is that of Tryptophan synthase beta chain from Pseudothermotoga lettingae (strain ATCC BAA-301 / DSM 14385 / NBRC 107922 / TMO) (Thermotoga lettingae).